Consider the following 310-residue polypeptide: tRNA uridine(34) hydroxylase (310 aa).

One can recognise a Rhodanese domain in the interval 123 to 217; the sequence is ADPDVVVIDV…YLEKVPEDES (95 aa). Catalysis depends on C177, which acts as the Cysteine persulfide intermediate.

This sequence belongs to the TrhO family.

The catalysed reaction is uridine(34) in tRNA + AH2 + O2 = 5-hydroxyuridine(34) in tRNA + A + H2O. Its function is as follows. Catalyzes oxygen-dependent 5-hydroxyuridine (ho5U) modification at position 34 in tRNAs. The chain is tRNA uridine(34) hydroxylase from Acaryochloris marina (strain MBIC 11017).